The following is a 112-amino-acid chain: Large ribosomal subunit protein P2-B (112 aa).

The interval 89 to 112 is disordered; the sequence is APAAADAKKEEEEEDDDMGFGLFD.

The protein belongs to the eukaryotic ribosomal protein P1/P2 family. In terms of assembly, P1 and P2 exist as dimers at the large ribosomal subunit. Phosphorylated.

Functionally, plays an important role in the elongation step of protein synthesis. This Trypanosoma cruzi protein is Large ribosomal subunit protein P2-B.